The sequence spans 764 residues: Protein sey1 (764 aa).

Topologically, residues 1-659 (MQQSAQLITE…KRSIISTATR (659 aa)) are cytoplasmic. The region spanning 31–246 (GFDYHVVAVL…NPKYLFKPCY (216 aa)) is the GB1/RHD3-type G domain. 41–48 (GSQSTGKS) is a GTP binding site. Coiled-coil stretches lie at residues 302 to 322 (EELL…QRLE) and 421 to 443 (DAEQ…MREE). A helical membrane pass occupies residues 660–680 (VPGYFWALLAVLGWNEFVSVL). The Lumenal segment spans residues 681 to 683 (KNP). The helical transmembrane segment at 684 to 704 (VLLTLLLIVVSFLFILVQTGL) threads the bilayer. At 705 to 764 (AGPVKAFAERSVRNAVNSMGEKLAEKLDDYRSTSPASETTSGRVISAENSSVDEKVSTTP) the chain is on the cytoplasmic side. The segment at 731-764 (LDDYRSTSPASETTSGRVISAENSSVDEKVSTTP) is disordered. Positions 736–754 (STSPASETTSGRVISAENS) are enriched in polar residues.

This sequence belongs to the TRAFAC class dynamin-like GTPase superfamily. GB1/RHD3 GTPase family. RHD3 subfamily.

It localises to the endoplasmic reticulum membrane. In terms of biological role, cooperates with the reticulon proteins and tubule-shaping DP1 family proteins to generate and maintain the structure of the tubular endoplasmic reticulum network. Has GTPase activity, which is required for its function in ER organization. The sequence is that of Protein sey1 (sey1) from Schizosaccharomyces japonicus (strain yFS275 / FY16936) (Fission yeast).